Reading from the N-terminus, the 401-residue chain is Argininosuccinate synthase (401 aa).

Position 9–17 (9–17 (AYSGGLDTS)) interacts with ATP. L-citrulline is bound at residue Y86. ATP is bound at residue G116. Residues T118, N122, and D123 each contribute to the L-aspartate site. Residue N122 coordinates L-citrulline. Residues R126, S174, S183, E259, and Y271 each contribute to the L-citrulline site.

Belongs to the argininosuccinate synthase family. Type 1 subfamily. As to quaternary structure, homotetramer.

It localises to the cytoplasm. It carries out the reaction L-citrulline + L-aspartate + ATP = 2-(N(omega)-L-arginino)succinate + AMP + diphosphate + H(+). The protein operates within amino-acid biosynthesis; L-arginine biosynthesis; L-arginine from L-ornithine and carbamoyl phosphate: step 2/3. In Bacillus cereus (strain Q1), this protein is Argininosuccinate synthase.